The sequence spans 67 residues: Alpha-toxin Cn12 (67 aa).

Positions 1–66 constitute an LCN-type CS-alpha/beta domain; it reads RDGYPLASNG…WGDSGTGPCR (66 aa). 4 disulfides stabilise this stretch: cysteine 11–cysteine 65, cysteine 15–cysteine 40, cysteine 25–cysteine 45, and cysteine 29–cysteine 47.

In terms of tissue distribution, expressed by the venom gland.

Its subcellular location is the secreted. Its function is as follows. Alpha toxins bind voltage-independently at site-3 of sodium channels (Nav) and inhibit the inactivation of the activated channels, thereby blocking neuronal transmission. This toxin binds, in vitro, to sodium channels and inhibits the inactivation of the activated channels. Seems not toxic to mice, crickets and sweet-water shrimps. The sequence is that of Alpha-toxin Cn12 from Centruroides noxius (Mexican scorpion).